Here is a 168-residue protein sequence, read N- to C-terminus: Putative defense protein 1 (168 aa).

The signal sequence occupies residues 1–18 (MMFAYIVAVVSALALTSA). The 150-residue stretch at 19–168 (FPTGAPRSAC…SAPVKILSHH (150 aa)) folds into the Reelin domain. A disulfide bond links Cys28 and Cys105.

Belongs to the insect defense protein family. As to expression, very highly expressed in midgut, and highly expressed in fat body, silk gland and epidermis.

It is found in the secreted. As this protein is expressed upon bacterial infection, it may have antimicrobial activity. This Antheraea mylitta (Tasar silkworm) protein is Putative defense protein 1.